Here is a 315-residue protein sequence, read N- to C-terminus: Salivary protein SG34 (315 aa).

The first 20 residues, 1 to 20 (MPVSYDFVILLALFIVLARS), serve as a signal peptide directing secretion. Positions 98–161 (NAEVELLRES…QEEIEQQTKQ (64 aa)) form a coiled coil.

Functionally, (Microbial infection) Modulates replication of duck Tembusu virus in salivary glands and virus release into the saliva, probably via the regulation of antimicrobial peptides expression in response to duck Tembusu virus infection. The polypeptide is Salivary protein SG34 (Aedes albopictus (Asian tiger mosquito)).